The chain runs to 133 residues: MQIDIVQIVGLGLIATFLSLIVKEQKPTFAFLIVVFAGCAIFLYLVDQIYDIIRMIEKIAINANVNMVYVETILKIIGIAYIAEFGAQLTKDAGQGAIASKIELAGKILILVMAVPILTVIIETILGLIPSMS.

The next 3 membrane-spanning stretches (helical) occupy residues 2-22, 29-49, and 108-128; these read QIDI…SLIV, FAFL…VDQI, and ILIL…ILGL.

Its subcellular location is the cell membrane. In Bacillus subtilis (strain 168), this protein is Stage III sporulation protein AD (spoIIIAD).